The sequence spans 248 residues: NADP-dependent 3-hydroxy acid dehydrogenase YdfG (248 aa).

NADP(+)-binding positions include 7-12, 32-33, 54-55, and Asn-81; these read GATAGF, RR, and DV. Ser-134 contacts substrate. NADP(+) contacts are provided by residues Tyr-147, Lys-151, and 177 to 185; that span reads PGLVGGTEF. The active-site Proton acceptor is Tyr-147.

This sequence belongs to the short-chain dehydrogenases/reductases (SDR) family. Homotetramer.

The enzyme catalyses 3-hydroxypropanoate + NADP(+) = 3-oxopropanoate + NADPH + H(+). The catalysed reaction is L-allo-threonine + NADP(+) = aminoacetone + CO2 + NADPH. Its function is as follows. NADP-dependent dehydrogenase with broad substrate specificity acting on 3-hydroxy acids. Catalyzes the NADP-dependent oxidation of L-allo-threonine to L-2-amino-3-keto-butyrate, which is spontaneously decarboxylated into aminoacetone. Also acts on D-threonine, L-serine, D-serine, D-3-hydroxyisobutyrate, L-3-hydroxyisobutyrate, D-glycerate and L-glycerate. Able to catalyze the reduction of the malonic semialdehyde to 3-hydroxypropionic acid. YdfG is apparently supplementing RutE, the presumed malonic semialdehyde reductase involved in pyrimidine degradation since both are able to detoxify malonic semialdehyde. This chain is NADP-dependent 3-hydroxy acid dehydrogenase YdfG, found in Escherichia coli O6:H1 (strain CFT073 / ATCC 700928 / UPEC).